Consider the following 357-residue polypeptide: Uroporphyrinogen decarboxylase (357 aa).

Substrate-binding positions include 27 to 31 (RQAGR), Asp-77, Tyr-154, Ser-209, and His-330.

Belongs to the uroporphyrinogen decarboxylase family. As to quaternary structure, homodimer.

Its subcellular location is the cytoplasm. It carries out the reaction uroporphyrinogen III + 4 H(+) = coproporphyrinogen III + 4 CO2. The protein operates within porphyrin-containing compound metabolism; protoporphyrin-IX biosynthesis; coproporphyrinogen-III from 5-aminolevulinate: step 4/4. In terms of biological role, catalyzes the decarboxylation of four acetate groups of uroporphyrinogen-III to yield coproporphyrinogen-III. This chain is Uroporphyrinogen decarboxylase, found in Acinetobacter baumannii (strain AB0057).